The following is a 181-amino-acid chain: HGPRTase-like protein 2 (181 aa).

The protein belongs to the purine/pyrimidine phosphoribosyltransferase family. Archaeal HPRT subfamily.

In terms of biological role, may catalyze a purine salvage reaction, the substrate is unknown. This is HGPRTase-like protein 2 from Haloferax volcanii (strain ATCC 29605 / DSM 3757 / JCM 8879 / NBRC 14742 / NCIMB 2012 / VKM B-1768 / DS2) (Halobacterium volcanii).